The following is a 397-amino-acid chain: Acetate kinase (397 aa).

N8 is a Mg(2+) binding site. K15 contributes to the ATP binding site. Residue R89 participates in substrate binding. Catalysis depends on D146, which acts as the Proton donor/acceptor. Residues 206 to 210 (HLGNG), 281 to 283 (DLR), and 329 to 333 (GVGEN) each bind ATP. E382 is a binding site for Mg(2+).

The protein belongs to the acetokinase family. As to quaternary structure, homodimer. The cofactor is Mg(2+). Requires Mn(2+) as cofactor.

It is found in the cytoplasm. It catalyses the reaction acetate + ATP = acetyl phosphate + ADP. It functions in the pathway metabolic intermediate biosynthesis; acetyl-CoA biosynthesis; acetyl-CoA from acetate: step 1/2. In terms of biological role, catalyzes the formation of acetyl phosphate from acetate and ATP. Can also catalyze the reverse reaction. The protein is Acetate kinase of Bacillus thuringiensis subsp. konkukian (strain 97-27).